A 724-amino-acid chain; its full sequence is MSGQLNVAEDSVLLDDISISSIQPIVSDVPAAEDVGDEDHISGASIAENRPKDPTLVKYHAACQRGDLKTVKDMIEAGVIDVKADWDEEEQVSGLHWASANNRLNLVRYLIAQGADVNIKGGDLEATPLHWASKSGYVYIVHCLLEHGADPLITDRQGYNLLHTSTFSSEVMLITYVLFTGQIPVDSPDPTGKTALHWAAYQGDPNTVEALLKFDADVRVVDTGGFTPLHWATVKGHPHVLKALIEHGSDVFLKNNDGKNALMIAQEMNTQKALQNALYECGFNKDGFAIRKYFKNPMHAKMVTFFTPWLILGLILSFFAYFSILLAILGCLLTVLAAGYGLYNFVFPSFILMKRIVIFKTPLLAGILSGTIFWLLYVWLFKMLPATFDDEPILNLTVFALFAGVVFLLTKLLQSDPGYIVPATDHNQIRATIIELLRVGKYDSKHFCIHSWIRLPLRAKYKRFVHSVILRYDHYCPWIYNYIGFRNHKIFIYFILLLDLGILALAKLCLEYFDELKDHAKNKDALKCSILSKDLCAGFTYDPFTLFLLEWVCVQGMWILALSFVQFFECLKGVTEHEFAHWQRRNRGVVGREHVFNTAPEELMEEDPEEERNKLRSLGAAGQRHCCSTLTTATGFDRFLSVIGSSLGRQPRTTHNPINYPIETDYGWKQNLKDFWLTSDISAPMWRRILLPPVGTRGLLNGQEVDYQKLYNLPERVISIEEIV.

At 1 to 308 (MSGQLNVAED…HAKMVTFFTP (308 aa)) the chain is on the cytoplasmic side. 6 ANK repeats span residues 54–84 (PTLVKYHAACQRGDLKTVKDMIEAGVIDVKA), 90–119 (EQVSGLHWASANNRLNLVRYLIAQGADVNI), 124–153 (LEATPLHWASKSGYVYIVHCLLEHGADPLI), 157–187 (QGYNLLHTSTFSSEVMLITYVLFTGQIPVDS), 191–220 (TGKTALHWAAYQGDPNTVEALLKFDADVRV), and 224–253 (GGFTPLHWATVKGHPHVLKALIEHGSDVFL). A helical transmembrane segment spans residues 309–329 (WLILGLILSFFAYFSILLAIL). Residues 330–331 (GC) are Lumenal-facing. Residues 332–352 (LLTVLAAGYGLYNFVFPSFIL) traverse the membrane as a helical segment. The Cytoplasmic portion of the chain corresponds to 353–360 (MKRIVIFK). Residues 361 to 381 (TPLLAGILSGTIFWLLYVWLF) form a helical membrane-spanning segment. Topologically, residues 382-392 (KMLPATFDDEP) are lumenal. Residues 393–413 (ILNLTVFALFAGVVFLLTKLL) form a helical membrane-spanning segment. The Cytoplasmic segment spans residues 414–489 (QSDPGYIVPA…YNYIGFRNHK (76 aa)). The 51-residue stretch at 446 to 496 (HFCIHSWIRLPLRAKYKRFVHSVILRYDHYCPWIYNYIGFRNHKIFIYFIL) folds into the DHHC domain. The active-site S-palmitoyl cysteine intermediate is Cys476. A helical transmembrane segment spans residues 490-510 (IFIYFILLLDLGILALAKLCL). The Lumenal portion of the chain corresponds to 511-543 (EYFDELKDHAKNKDALKCSILSKDLCAGFTYDP). A helical membrane pass occupies residues 544-564 (FTLFLLEWVCVQGMWILALSF). Residues 565 to 724 (VQFFECLKGV…ERVISIEEIV (160 aa)) lie on the Cytoplasmic side of the membrane.

The protein belongs to the DHHC palmitoyltransferase family. AKR/ZDHHC17 subfamily.

The protein localises to the early endosome membrane. It localises to the golgi apparatus membrane. The enzyme catalyses L-cysteinyl-[protein] + hexadecanoyl-CoA = S-hexadecanoyl-L-cysteinyl-[protein] + CoA. In terms of biological role, palmitoyltransferase specific for casein kinase 1. In Eremothecium gossypii (strain ATCC 10895 / CBS 109.51 / FGSC 9923 / NRRL Y-1056) (Yeast), this protein is Palmitoyltransferase AKR1 (AKR1).